The following is a 278-amino-acid chain: Coiled-coil domain-containing protein 121 (278 aa).

Coiled-coil stretches lie at residues 1 to 30 and 105 to 243; these read MTDL…REKL and QAMR…LIQA. A disordered region spans residues 253–278; sequence QCLNRQDVPKTTPSLPQGTKSRINPK.

In Homo sapiens (Human), this protein is Coiled-coil domain-containing protein 121 (CCDC121).